Consider the following 212-residue polypeptide: Protein Rv0786c (212 aa).

This chain is Protein Rv0786c, found in Mycobacterium tuberculosis (strain ATCC 25618 / H37Rv).